Here is a 352-residue protein sequence, read N- to C-terminus: fMet-Leu-Phe receptor (352 aa).

Residues 1–27 lie on the Extracellular side of the membrane; sequence MDSNASLPLNVSGGTQATPAGLVVLDV. N-linked (GlcNAc...) asparagine glycans are attached at residues Asn4 and Asn10. A helical transmembrane segment spans residues 28 to 50; sequence FSYLILVVTFVLGVLGNGLVIWV. Residues 51–61 are Cytoplasmic-facing; the sequence is TGFRMTHTVTT. The chain crosses the membrane as a helical span at residues 62–83; sequence ISYLNLALADFSFTSTLPFFIV. At 84–100 the chain is on the extracellular side; the sequence is TKALGGHWPFGWFLCKF. Cys98 and Cys178 are disulfide-bonded. The chain crosses the membrane as a helical span at residues 101-121; sequence VFTIVDINLFGSVFLIALIAL. Residues 122 to 140 lie on the Cytoplasmic side of the membrane; it reads DRCICVLHPVWAQNHRNVS. Residues 141–162 form a helical membrane-spanning segment; it reads LAKKVIVGPWICALLLTLPVII. At 163 to 207 the chain is on the extracellular side; sequence RVTTLSHPRAPGKMACTFDWSPWTEDPAEKLKVAISMFMVRGIIR. Residues 208–228 traverse the membrane as a helical segment; it reads FIIGFSTPMSIVAVCYGLIAT. Topologically, residues 229–244 are cytoplasmic; the sequence is KIHRQGLIKSSRPLRV. Residues 245–268 form a helical membrane-spanning segment; that stretch reads LSFVVASFLLCWSPYQIAALIATV. The Extracellular segment spans residues 269–287; sequence RIRELLLGMGKDLRIVLDV. The helical transmembrane segment at 288-307 threads the bilayer; sequence TSFVAFFNSCLNPMLYVFMG. Topologically, residues 308–352 are cytoplasmic; sequence QDFRERLIHSLPASLERALSEDSAQTSDTGTNSTSAPAEAELQAI.

Belongs to the G-protein coupled receptor 1 family. In terms of processing, phosphorylated; which is necessary for desensitization. Neutrophils.

It is found in the cell membrane. High affinity receptor for N-formyl-methionyl peptides (fMLP), which are powerful neutrophil chemotactic factors. Binding of fMLP to the receptor stimulates intracellular calcium mobilization and superoxide anion release. This response is mediated via a G-protein that activates a phosphatidylinositol-calcium second messenger system. Receptor for TAFA4, mediates its effects on chemoattracting macrophages, promoting phagocytosis and increasing ROS release. Receptor for cathepsin CTSG, leading to increased phagocyte chemotaxis. The polypeptide is fMet-Leu-Phe receptor (FPR1) (Oryctolagus cuniculus (Rabbit)).